The chain runs to 319 residues: Tyrosine--tRNA ligase (319 aa).

Y35 is a binding site for L-tyrosine. Positions 40 to 48 (PSGKIHLGH) match the 'HIGH' region motif. L-tyrosine is bound by residues Y156, Q160, D163, and Q178. A 'KMSKS' region motif is present at residues 213 to 217 (KMSSS). S216 contributes to the ATP binding site.

Belongs to the class-I aminoacyl-tRNA synthetase family. TyrS type 3 subfamily. In terms of assembly, homodimer.

Its subcellular location is the cytoplasm. The catalysed reaction is tRNA(Tyr) + L-tyrosine + ATP = L-tyrosyl-tRNA(Tyr) + AMP + diphosphate + H(+). Functionally, catalyzes the attachment of tyrosine to tRNA(Tyr) in a two-step reaction: tyrosine is first activated by ATP to form Tyr-AMP and then transferred to the acceptor end of tRNA(Tyr). This Methanobrevibacter smithii (strain ATCC 35061 / DSM 861 / OCM 144 / PS) protein is Tyrosine--tRNA ligase.